A 58-amino-acid chain; its full sequence is Small ribosomal subunit protein bS21B (58 aa).

It belongs to the bacterial ribosomal protein bS21 family.

In Nostoc sp. (strain PCC 7120 / SAG 25.82 / UTEX 2576), this protein is Small ribosomal subunit protein bS21B (rpsU2).